The chain runs to 358 residues: Magnesium-protoporphyrin IX monomethyl ester [oxidative] cyclase 1 (358 aa).

The protein belongs to the AcsF family. Requires Fe cation as cofactor.

It catalyses the reaction Mg-protoporphyrin IX 13-monomethyl ester + 3 NADPH + 3 O2 + 2 H(+) = 3,8-divinyl protochlorophyllide a + 3 NADP(+) + 5 H2O. It participates in porphyrin-containing compound metabolism; chlorophyll biosynthesis (light-independent). Catalyzes the formation of the isocyclic ring in chlorophyll biosynthesis. Mediates the cyclase reaction, which results in the formation of divinylprotochlorophyllide (Pchlide) characteristic of all chlorophylls from magnesium-protoporphyrin IX 13-monomethyl ester (MgPMME). This is Magnesium-protoporphyrin IX monomethyl ester [oxidative] cyclase 1 from Synechocystis sp. (strain ATCC 27184 / PCC 6803 / Kazusa).